The sequence spans 366 residues: Mitochondrial carrier protein MTM1 (366 aa).

3 Solcar repeats span residues glutamate 14–valine 149, tyrosine 156–arginine 250, and valine 266–valine 359. 6 helical membrane-spanning segments follow: residues leucine 17–valine 36, serine 126–isoleucine 146, leucine 162–valine 182, threonine 229–glutamate 249, phenylalanine 268–threonine 286, and leucine 331–serine 352.

It belongs to the mitochondrial carrier (TC 2.A.29) family.

It is found in the mitochondrion inner membrane. Its function is as follows. Involved in the mitochondrial activation of SOD2 by specifically facilitating insertion of the essential manganese cofactor. Has the ability to activate iron regulon in an iron-dependent manner. Responds to calorie restriction (CR) strength. This chain is Mitochondrial carrier protein MTM1 (MTM1), found in Saccharomyces cerevisiae (strain ATCC 204508 / S288c) (Baker's yeast).